A 66-amino-acid chain; its full sequence is Beta-toxin Css6 (66 aa).

The 66-residue stretch at 1 to 66 (KEGYLVNSYT…VWPLPNKTCN (66 aa)) folds into the LCN-type CS-alpha/beta domain. 4 cysteine pairs are disulfide-bonded: C12/C65, C16/C41, C25/C46, and C29/C48. N66 is subject to Asparagine amide.

It belongs to the long (4 C-C) scorpion toxin superfamily. Sodium channel inhibitor family. Beta subfamily. Expressed by the venom gland.

Its subcellular location is the secreted. Functionally, beta toxins bind voltage-independently at site-4 of sodium channels (Nav) and shift the voltage of activation toward more negative potentials thereby affecting sodium channel activation and promoting spontaneous and repetitive firing. The polypeptide is Beta-toxin Css6 (Centruroides suffusus (Durango bark scorpion)).